Reading from the N-terminus, the 837-residue chain is Protein translocase subunit SecA (837 aa).

Residues Gln85, 103-107 (GEGKT), and Asp493 each bind ATP. Residues Cys821, Cys823, Cys832, and His833 each contribute to the Zn(2+) site.

This sequence belongs to the SecA family. As to quaternary structure, monomer and homodimer. Part of the essential Sec protein translocation apparatus which comprises SecA, SecYEG and auxiliary proteins SecDF. Other proteins may also be involved. Zn(2+) is required as a cofactor.

It is found in the cell membrane. The protein localises to the cytoplasm. It carries out the reaction ATP + H2O + cellular proteinSide 1 = ADP + phosphate + cellular proteinSide 2.. Functionally, part of the Sec protein translocase complex. Interacts with the SecYEG preprotein conducting channel. Has a central role in coupling the hydrolysis of ATP to the transfer of proteins into and across the cell membrane, serving as an ATP-driven molecular motor driving the stepwise translocation of polypeptide chains across the membrane. This is Protein translocase subunit SecA from Streptococcus pneumoniae serotype 19F (strain G54).